The primary structure comprises 322 residues: Heat-inducible transcription repressor HrcA (322 aa).

This sequence belongs to the HrcA family.

Its function is as follows. Negative regulator of class I heat shock genes (grpE-dnaK-dnaJ and groELS operons). Prevents heat-shock induction of these operons. This is Heat-inducible transcription repressor HrcA from Staphylococcus carnosus (strain TM300).